A 141-amino-acid chain; its full sequence is Protein stum homolog (141 aa).

Residue Ser-26 is modified to Phosphoserine. 2 consecutive transmembrane segments (helical) span residues 51 to 71 and 87 to 107; these read FPVA…GTFV and RHVC…ILTA.

This sequence belongs to the SPEC3 family. Stum subfamily.

It localises to the membrane. The sequence is that of Protein stum homolog from Homo sapiens (Human).